The sequence spans 669 residues: MGKIKELQTSLANKIAAGEVVERPSSVVKELLENAIDAGATEISIEVEESGVQSIRVVDNGSGIEAEDLGLVFHRHATSKLDQDEDLFHIRTLGFRGEALASISSVAKVTLKTCTDNANGNEIYVENGEILNHKPAKAKKGTDILVESLFYNTPARLKYIKSLYTELGKITDIVNRMAMSHPDIRIALISDGKTMLSTNGSGRTNEVMAEIYGMKVARDLVHISGDTSDYHIEGFVAKPEHSRSNKHYISIFINGRYIKNFMLNKAILEGYHTLLTIGRFPICYINIEMDPILVDVNVHPTKLEVRLSKEEQLYQLIVSKIQEAFKDRILIPKNNLDYVPKKNKVLHSFEQQKIEFEQRQNTENNQEKTFSSEESNSKPFMEENQNDEIVIKEDSYNPFVTKTSESLIADDESSGYNNTREKDEDYFKKQQEILQEMDQTFDSNDGTTVQNYENKASDDYYDVNDIKGTKSKDPKRRIPYMEIVGQVHGTYIIAQNEFGMYMIDQHAAQERIKYEYFRDKIGEVTNEVQDLLIPLTFHFSKDEQLVIDQYKNELQQVGIMLEHFGGHDYIVSSYPVWFPKDEVEEIIKDMIELILEEKKVDIKKLREDVAIMMSCKKSIKANHYLQKHEMSDLIDQLREAEDPFTCPHGRPIIINFSKYELEKLFKRVM.

The segment at 356–382 (FEQRQNTENNQEKTFSSEESNSKPFME) is disordered. Residues 361–378 (NTENNQEKTFSSEESNSK) are compositionally biased toward polar residues.

The protein belongs to the DNA mismatch repair MutL/HexB family.

In terms of biological role, this protein is involved in the repair of mismatches in DNA. It is required for dam-dependent methyl-directed DNA mismatch repair. May act as a 'molecular matchmaker', a protein that promotes the formation of a stable complex between two or more DNA-binding proteins in an ATP-dependent manner without itself being part of a final effector complex. The polypeptide is DNA mismatch repair protein MutL (Staphylococcus aureus (strain USA300)).